The sequence spans 420 residues: UDP-N-acetylglucosamine 1-carboxyvinyltransferase (420 aa).

22-23 (KN) is a phosphoenolpyruvate binding site. Position 92 (R92) interacts with UDP-N-acetyl-alpha-D-glucosamine. Catalysis depends on C116, which acts as the Proton donor. At C116 the chain carries 2-(S-cysteinyl)pyruvic acid O-phosphothioketal. Residues 121-125 (RPVDQ), D304, and I326 contribute to the UDP-N-acetyl-alpha-D-glucosamine site.

It belongs to the EPSP synthase family. MurA subfamily.

It is found in the cytoplasm. It catalyses the reaction phosphoenolpyruvate + UDP-N-acetyl-alpha-D-glucosamine = UDP-N-acetyl-3-O-(1-carboxyvinyl)-alpha-D-glucosamine + phosphate. It functions in the pathway cell wall biogenesis; peptidoglycan biosynthesis. Functionally, cell wall formation. Adds enolpyruvyl to UDP-N-acetylglucosamine. The sequence is that of UDP-N-acetylglucosamine 1-carboxyvinyltransferase from Paraburkholderia phytofirmans (strain DSM 17436 / LMG 22146 / PsJN) (Burkholderia phytofirmans).